The chain runs to 1172 residues: DNA-directed RNA polymerases IV and V subunit 2 (1172 aa).

A Mg(2+)-binding site is contributed by aspartate 786. Residues cysteine 1108, cysteine 1111, cysteine 1133, and cysteine 1136 each coordinate Zn(2+). The C4-type zinc finger occupies 1108 to 1136; that stretch reads CRKCKTYANVIERTPSSGRKIRGPYCRVC.

Belongs to the RNA polymerase beta chain family. Component of the RNA polymerase IV and V complexes. Interacts with SSH1, NRPD1 and NRPE1. In terms of tissue distribution, mostly expressed in seedlings, flowers and roots, present ubiquitously, except in sperm cells.

Its subcellular location is the nucleus. It carries out the reaction RNA(n) + a ribonucleoside 5'-triphosphate = RNA(n+1) + diphosphate. Functionally, DNA-dependent RNA polymerase catalyzes the transcription of DNA into RNA using the four ribonucleoside triphosphates as substrates. Second largest component of RNA polymerases IV and V which mediate short-interfering RNAs (siRNA) accumulation and subsequent RNA-directed DNA methylation-dependent (RdDM) transcriptional gene silencing (TGS) of endogenous repeated sequences, including transposable elements. Proposed to contribute to the polymerase catalytic activity and forms the polymerase active center together with the largest subunit. Also required for full erasure of methylation when the RNA trigger is withdrawn. Required for intercellular RNA interference (RNAi) leading to systemic post-transcriptional gene silencing. Involved in the maintenance of post-transcriptional RNA silencing. During interphase, mediates siRNA-independent heterochromatin association and methylation into chromocenters and condensation and cytosine methylation at pericentromeric major repeats. Required for complete maintenance of the 35S promoter homology-dependent TGS in transgenic plants and for the initial establishment of DNA methylation. The chain is DNA-directed RNA polymerases IV and V subunit 2 (NRPD2) from Arabidopsis thaliana (Mouse-ear cress).